A 207-amino-acid chain; its full sequence is Ribosomal RNA small subunit methyltransferase G (207 aa).

Residues Gly76, Gln81, 127–128, and Arg141 each bind S-adenosyl-L-methionine; that span reads VE.

It belongs to the methyltransferase superfamily. RNA methyltransferase RsmG family.

Its subcellular location is the cytoplasm. The catalysed reaction is guanosine(527) in 16S rRNA + S-adenosyl-L-methionine = N(7)-methylguanosine(527) in 16S rRNA + S-adenosyl-L-homocysteine. Functionally, specifically methylates the N7 position of guanine in position 527 of 16S rRNA. The polypeptide is Ribosomal RNA small subunit methyltransferase G (Neisseria gonorrhoeae (strain ATCC 700825 / FA 1090)).